Here is a 124-residue protein sequence, read N- to C-terminus: Secretion system apparatus protein SsaP (124 aa).

This Salmonella typhi protein is Secretion system apparatus protein SsaP (ssaP).